A 192-amino-acid chain; its full sequence is Xanthine phosphoribosyltransferase (192 aa).

Xanthine is bound by residues L20 and N27. 128-132 (ANGQA) is a binding site for 5-phospho-alpha-D-ribose 1-diphosphate. K156 lines the xanthine pocket.

The protein belongs to the purine/pyrimidine phosphoribosyltransferase family. Xpt subfamily. As to quaternary structure, homodimer.

Its subcellular location is the cytoplasm. The catalysed reaction is XMP + diphosphate = xanthine + 5-phospho-alpha-D-ribose 1-diphosphate. The protein operates within purine metabolism; XMP biosynthesis via salvage pathway; XMP from xanthine: step 1/1. In terms of biological role, converts the preformed base xanthine, a product of nucleic acid breakdown, to xanthosine 5'-monophosphate (XMP), so it can be reused for RNA or DNA synthesis. The sequence is that of Xanthine phosphoribosyltransferase from Lacticaseibacillus casei (strain BL23) (Lactobacillus casei).